The primary structure comprises 282 residues: Energy-coupling factor transporter ATP-binding protein EcfA1 (282 aa).

The region spanning 6 to 243 (VTVKHLSFTY…EVLIKSAGLE (238 aa)) is the ABC transporter domain. Residue 40 to 47 (GHNGSGKS) participates in ATP binding.

This sequence belongs to the ABC transporter superfamily. Energy-coupling factor EcfA family. As to quaternary structure, forms a stable energy-coupling factor (ECF) transporter complex composed of 2 membrane-embedded substrate-binding proteins (S component), 2 ATP-binding proteins (A component) and 2 transmembrane proteins (T component).

The protein localises to the cell membrane. Its function is as follows. ATP-binding (A) component of a common energy-coupling factor (ECF) ABC-transporter complex. Unlike classic ABC transporters this ECF transporter provides the energy necessary to transport a number of different substrates. The protein is Energy-coupling factor transporter ATP-binding protein EcfA1 of Lactobacillus johnsonii (strain CNCM I-12250 / La1 / NCC 533).